We begin with the raw amino-acid sequence, 372 residues long: Histidinol-phosphate aminotransferase (372 aa).

Lys-229 is subject to N6-(pyridoxal phosphate)lysine.

It belongs to the class-II pyridoxal-phosphate-dependent aminotransferase family. Histidinol-phosphate aminotransferase subfamily. In terms of assembly, homodimer. Requires pyridoxal 5'-phosphate as cofactor.

It carries out the reaction L-histidinol phosphate + 2-oxoglutarate = 3-(imidazol-4-yl)-2-oxopropyl phosphate + L-glutamate. Its pathway is amino-acid biosynthesis; L-histidine biosynthesis; L-histidine from 5-phospho-alpha-D-ribose 1-diphosphate: step 7/9. This chain is Histidinol-phosphate aminotransferase, found in Bdellovibrio bacteriovorus (strain ATCC 15356 / DSM 50701 / NCIMB 9529 / HD100).